A 608-amino-acid chain; its full sequence is MTSTLDLDKGCTVEELLRGCIEAFDDSGKVRDPQLVRMFLMMHPWYIPSSQLASKLLHFYQQSRKDNSNSLQMKTCHLVRYWISAFPAEFDLNPELAEQIKELKALLDQEGNRRHSSLIDIESVPTYKWKRQVTQRNPVEQKKRKMSLLFDHLEPMELAEHLTYLEYRSFCKILFQDYHSFVTHGCTVDNPVLERFISLFNSVSQWVQLMILSKPTATQRALVITHFVHVAERLLQLQNFNTLMAVVGGLSHSSISRLKETHSHVSPDTIKLWEGLTELVTATGNYSNYRRRLAACVGFRFPILGVHLKDLVALQLALPDWLDPGRTRLNGAKMRQLFCILEELAMVTSLRPPVQANPDLLSLLTVSLDQYQTEDELYQLSLQREPRSKSSPTSPTSCTPPPRPPVLEEWTSVAKPKLDQALVAEHIEKMVESVFRNFDVDGDGHISQEEFQIIRGNFPYLSAFGDLDQNQDGCISREEMISYFLRSSSVLGGRMGFVHNFQESNSLRPVACRHCKALILGIYKQGLKCRACGVNCHKQCKERLSVECRRRAQSVSLEGSAPSPSPTHTHHRAFSFSLPRPGRRSSRPPEIREEEVQSVEDGVFDIHL.

Residues 4-126 (TLDLDKGCTV…SLIDIESVPT (123 aa)) enclose the N-terminal Ras-GEF domain. Phosphoserine occurs at positions 116, 117, and 147. In terms of domain architecture, Ras-GEF spans 154–387 (EPMELAEHLT…YQLSLQREPR (234 aa)). Positions 382-405 (LQREPRSKSSPTSPTSCTPPPRPP) are disordered. 2 EF-hand domains span residues 426 to 461 (HIEKMVESVFRNFDVDGDGHISQEEFQIIRGNFPYL) and 463 to 490 (AFGDLDQNQDGCISREEMISYFLRSSSV). The Ca(2+) site is built by D439, D441, D443, H445, E450, D468, N470, D472, C474, and E479. The Phorbol-ester/DAG-type zinc finger occupies 498–548 (VHNFQESNSLRPVACRHCKALILGIYKQGLKCRACGVNCHKQCKERLSVEC). S554 and S575 each carry phosphoserine. The interval 555–596 (VSLEGSAPSPSPTHTHHRAFSFSLPRPGRRSSRPPEIREEEV) is disordered.

Belongs to the RASGRP family. Forms a signaling complex with RAP1 and BRAF. Interacts with F-actin. Interacts with RAP1. In terms of tissue distribution, detected in megakaryocytes, platelet and neutrophils but not in lymphocytes (at protein level). Isoform 1 and isoform 3 are detected in brain basal glanglia, heart, lung, spleen, liver and kidney interstitial cells.

It is found in the cytoplasm. The protein resides in the cytosol. The protein localises to the cell membrane. Its subcellular location is the synapse. It localises to the synaptosome. It is found in the cell projection. The protein resides in the ruffle membrane. Functions as a calcium- and DAG-regulated nucleotide exchange factor specifically activating Rap through the exchange of bound GDP for GTP. May also activate other GTPases such as RRAS, RRAS2, NRAS, KRAS but not HRAS. Functions in aggregation of platelets and adhesion of T-lymphocytes and neutrophils probably through inside-out integrin activation. May function in the muscarinic acetylcholine receptor M1/CHRM1 signaling pathway. This is RAS guanyl-releasing protein 2 (Rasgrp2) from Mus musculus (Mouse).